Consider the following 252-residue polypeptide: Ribosomal RNA small subunit methyltransferase J (252 aa).

S-adenosyl-L-methionine is bound by residues 101–102 (RD), 117–118 (ER), 153–154 (SS), and Asp171.

Belongs to the methyltransferase superfamily. RsmJ family.

Its subcellular location is the cytoplasm. It catalyses the reaction guanosine(1516) in 16S rRNA + S-adenosyl-L-methionine = N(2)-methylguanosine(1516) in 16S rRNA + S-adenosyl-L-homocysteine + H(+). Specifically methylates the guanosine in position 1516 of 16S rRNA. This chain is Ribosomal RNA small subunit methyltransferase J, found in Citrobacter koseri (strain ATCC BAA-895 / CDC 4225-83 / SGSC4696).